A 328-amino-acid polypeptide reads, in one-letter code: Malate dehydrogenase (328 aa).

11–17 contacts NAD(+); the sequence is GAAGQIG. 2 residues coordinate substrate: Arg-92 and Arg-98. Residues Asn-105, Gln-112, and 129-131 contribute to the NAD(+) site; that span reads TGN. Substrate contacts are provided by Asn-131 and Arg-162. Residue His-187 is the Proton acceptor of the active site.

Belongs to the LDH/MDH superfamily. MDH type 2 family.

It catalyses the reaction (S)-malate + NAD(+) = oxaloacetate + NADH + H(+). Functionally, catalyzes the reversible oxidation of malate to oxaloacetate. This Paenarthrobacter aurescens (strain TC1) protein is Malate dehydrogenase.